We begin with the raw amino-acid sequence, 287 residues long: Protease HtpX homolog (287 aa).

2 helical membrane passes run 5–25 (IRTG…GYWI) and 28–48 (GAGA…AYWV). His131 provides a ligand contact to Zn(2+). Residue Glu132 is part of the active site. Residue His135 coordinates Zn(2+). 2 consecutive transmembrane segments (helical) span residues 146 to 166 (VTAT…FFGG) and 174 to 194 (PFAG…ATLV). Glu203 serves as a coordination point for Zn(2+).

Belongs to the peptidase M48B family. Requires Zn(2+) as cofactor.

Its subcellular location is the cell inner membrane. The polypeptide is Protease HtpX homolog (Acidiphilium cryptum (strain JF-5)).